We begin with the raw amino-acid sequence, 214 residues long: Killer cell lectin-like receptor subfamily B member 1 (214 aa).

Residues 1 to 42 lie on the Cytoplasmic side of the membrane; sequence MDAPVLYAELHLANTQGLRCTSPPSPRQDACWGSGWHRVALK. The helical; Signal-anchor for type II membrane protein transmembrane segment at 43 to 63 threads the bilayer; that stretch reads LGCVGLILLLMGLSVLVGFLV. At 64–214 the chain is on the extracellular side; sequence QKPPIEKCSV…WICQKTLKRV (151 aa). Positions 98-208 constitute a C-type lectin domain; the sequence is HWNKCLFISQ…CSSDNHWICQ (111 aa). Disulfide bonds link cysteine 119/cysteine 207 and cysteine 186/cysteine 199.

The protein localises to the membrane. The sequence is that of Killer cell lectin-like receptor subfamily B member 1 (Klrb1) from Rattus norvegicus (Rat).